The following is a 506-amino-acid chain: MKEYRVYLERARSRQQDFLYPLIFREYIYGLAYSHNFNRSIFVENGGYDNKYTLLNVKRLITRMYQQNHLIISANDSNKNPFLGYNKNFYSQIISEGFAIVVEIPFFLQLSSSLEEAEIIKSYKNVRSIHSVFPFLEDKFTYLNYVSDIRIPYPIHLEILVQILRYWVKDVPFFHLLRWFLYHFXNWNCFIPTKKSISTFSKSNPRLFLFLYNFYVCEYESIFLFLRNKSYHLRLKSFSVFFERNFFYAKREHLVEVFSKDFSYTLPFFKDPNIHYVRYQGKCILASKNVPFLMNKWKYYFIHLWQCFFDVWSQPRTININQLSEHSFQLLGYFSNVRLNRSVVRSQMLQNTFLIEIVSKKLDIIVPIIPLIRSLAKAKFCNVLGHPISKPVWADSSDFDIIXRFLRICRNLSHYYNGSSKKKSLYRIKYILRLSCIKTLACKHKSTVRAFLKRSGSEELLEEFFTEEEEILSLIFPRDSFTLHRFHRNRIWYLDILFSNDLVNDE.

This sequence belongs to the intron maturase 2 family. MatK subfamily.

The protein resides in the plastid. Its subcellular location is the chloroplast. Functionally, usually encoded in the trnK tRNA gene intron. Probably assists in splicing its own and other chloroplast group II introns. The protein is Maturase K of Trifolium willdenovii (Tomcat clover).